The sequence spans 216 residues: Redox-sensing transcriptional repressor Rex (216 aa).

The H-T-H motif DNA-binding region spans 20–59 (QYYRLFKSLVEENVTRTNSQLISEKIGVDAATIRRDFSLF). Residue 94–99 (GVGNLG) participates in NAD(+) binding.

This sequence belongs to the transcriptional regulatory Rex family. In terms of assembly, homodimer.

Its subcellular location is the cytoplasm. Its function is as follows. Modulates transcription in response to changes in cellular NADH/NAD(+) redox state. In Lactococcus lactis subsp. cremoris (Streptococcus cremoris), this protein is Redox-sensing transcriptional repressor Rex.